We begin with the raw amino-acid sequence, 440 residues long: Xaa-Pro dipeptidase (440 aa).

Mn(2+) is bound by residues Asp-244, Asp-255, His-335, Glu-380, and Glu-419.

The protein belongs to the peptidase M24B family. Bacterial-type prolidase subfamily. It depends on Mn(2+) as a cofactor.

The enzyme catalyses Xaa-L-Pro dipeptide + H2O = an L-alpha-amino acid + L-proline. Splits dipeptides with a prolyl residue in the C-terminal position. The polypeptide is Xaa-Pro dipeptidase (Shewanella baltica (strain OS195)).